The sequence spans 365 residues: MSKPAVKSVQSATAKTATRAVNIRQKVKAPKQAKPEAKGRVRPSKDKPRVEIKKALHPRNAHLNGYDFPALISAFPQLKTFVRPTPYGALSVDFADPLAVKTLNAALLKHHYGIGSWNIPEGALCPPIPGRVDYVHYVADLLAEGDKSCAMDKARVLDIGTGANGIYPILGCQVYGWQYVASDINAHSLTNVQSIIEQNPVLQGRISLRLQPDDKAVFKGVIQAEERFELTLCNPPFHASMAEASEGTKRKVNNLQLNRGSSVKAAPKLNFGGQAAELWCQGGERQFLATMIRESQMFADQCLWFTSLVSKQENLKPCYQALAQLNVDTVKTIEMQQGNKITRVLAWSFQSAAKRKLWRAEHLAN.

The segment at methionine 1–arginine 49 is disordered. Positions alanine 33–arginine 49 are enriched in basic and acidic residues.

It belongs to the methyltransferase superfamily. METTL16/RlmF family.

It is found in the cytoplasm. It carries out the reaction adenosine(1618) in 23S rRNA + S-adenosyl-L-methionine = N(6)-methyladenosine(1618) in 23S rRNA + S-adenosyl-L-homocysteine + H(+). Functionally, specifically methylates the adenine in position 1618 of 23S rRNA. The polypeptide is Ribosomal RNA large subunit methyltransferase F (Shewanella baltica (strain OS185)).